The following is a 313-amino-acid chain: Ribosomal RNA small subunit methyltransferase H (313 aa).

S-adenosyl-L-methionine-binding positions include 35-37, Asp-55, Phe-79, Asp-100, and Gln-107; that span reads GGH.

It belongs to the methyltransferase superfamily. RsmH family.

It localises to the cytoplasm. The enzyme catalyses cytidine(1402) in 16S rRNA + S-adenosyl-L-methionine = N(4)-methylcytidine(1402) in 16S rRNA + S-adenosyl-L-homocysteine + H(+). In terms of biological role, specifically methylates the N4 position of cytidine in position 1402 (C1402) of 16S rRNA. This Burkholderia thailandensis (strain ATCC 700388 / DSM 13276 / CCUG 48851 / CIP 106301 / E264) protein is Ribosomal RNA small subunit methyltransferase H.